The primary structure comprises 542 residues: Chaperonin GroEL (542 aa).

ATP-binding positions include 29 to 32, 86 to 90, Gly413, 478 to 480, and Asp494; these read TLGP, DGTTT, and DAL.

The protein belongs to the chaperonin (HSP60) family. In terms of assembly, forms a cylinder of 14 subunits composed of two heptameric rings stacked back-to-back. Interacts with the co-chaperonin GroES.

The protein resides in the cytoplasm. The enzyme catalyses ATP + H2O + a folded polypeptide = ADP + phosphate + an unfolded polypeptide.. In terms of biological role, together with its co-chaperonin GroES, plays an essential role in assisting protein folding. The GroEL-GroES system forms a nano-cage that allows encapsulation of the non-native substrate proteins and provides a physical environment optimized to promote and accelerate protein folding. In Clostridioides difficile (strain 630) (Peptoclostridium difficile), this protein is Chaperonin GroEL.